The following is a 206-amino-acid chain: Small ribosomal subunit protein uS4 (206 aa).

The 61-residue stretch at 96-156 folds into the S4 RNA-binding domain; that stretch reads TRLDNVVYRM…EKSRTQARIK (61 aa).

It belongs to the universal ribosomal protein uS4 family. Part of the 30S ribosomal subunit. Contacts protein S5. The interaction surface between S4 and S5 is involved in control of translational fidelity.

In terms of biological role, one of the primary rRNA binding proteins, it binds directly to 16S rRNA where it nucleates assembly of the body of the 30S subunit. With S5 and S12 plays an important role in translational accuracy. The sequence is that of Small ribosomal subunit protein uS4 from Shewanella baltica (strain OS223).